A 283-amino-acid polypeptide reads, in one-letter code: Elongation factor Ts (283 aa).

Residues 80-83 are involved in Mg(2+) ion dislocation from EF-Tu; sequence TDFV.

The protein belongs to the EF-Ts family.

The protein resides in the cytoplasm. Its function is as follows. Associates with the EF-Tu.GDP complex and induces the exchange of GDP to GTP. It remains bound to the aminoacyl-tRNA.EF-Tu.GTP complex up to the GTP hydrolysis stage on the ribosome. The sequence is that of Elongation factor Ts from Erwinia tasmaniensis (strain DSM 17950 / CFBP 7177 / CIP 109463 / NCPPB 4357 / Et1/99).